A 146-amino-acid polypeptide reads, in one-letter code: Large ribosomal subunit protein uL15 (146 aa).

A disordered region spans residues Met1–Glu51. Composition is skewed to gly residues over residues Arg21–Ser31 and Ser42–Glu51.

Belongs to the universal ribosomal protein uL15 family. In terms of assembly, part of the 50S ribosomal subunit.

Its function is as follows. Binds to the 23S rRNA. The chain is Large ribosomal subunit protein uL15 from Anoxybacillus flavithermus (strain DSM 21510 / WK1).